The sequence spans 423 residues: Histone acetyltransferase type B subunit 2 (423 aa).

5 WD repeats span residues Pro138–Glu174, Ser175–Ser224, Ser228–Lys268, Pro271–His311, and Gly315–Ser355. Positions Asp357–Asp361 are interaction with the histone H4 N-terminus. The stretch at Gly372–Ser412 is one WD 6 repeat.

It belongs to the WD repeat RBAP46/RBAP48/MSI1 family. As to quaternary structure, component of the HAT-B complex composed of at least HAT1 and HAT2. The HAT-B complex binds to histone H4 tail.

It is found in the cytoplasm. It localises to the nucleus. Functionally, regulatory subunit of the histone acetylase B (HAT-B) complex. The complex acetylates 'Lys-12' of histone H4 which is required for telomeric silencing. The sequence is that of Histone acetyltransferase type B subunit 2 (HAT2) from Eremothecium gossypii (strain ATCC 10895 / CBS 109.51 / FGSC 9923 / NRRL Y-1056) (Yeast).